The chain runs to 127 residues: Ribosome-binding factor A (127 aa).

The protein belongs to the RbfA family. In terms of assembly, monomer. Binds 30S ribosomal subunits, but not 50S ribosomal subunits or 70S ribosomes.

It localises to the cytoplasm. Functionally, one of several proteins that assist in the late maturation steps of the functional core of the 30S ribosomal subunit. Associates with free 30S ribosomal subunits (but not with 30S subunits that are part of 70S ribosomes or polysomes). Required for efficient processing of 16S rRNA. May interact with the 5'-terminal helix region of 16S rRNA. This chain is Ribosome-binding factor A, found in Stenotrophomonas maltophilia (strain R551-3).